The sequence spans 1085 residues: Protein CROWDED NUCLEI 3 (1085 aa).

2 coiled-coil regions span residues 51–149 and 185–695; these read DEAS…NDLK and RERA…LDVL. Residue Lys-318 forms a Glycyl lysine isopeptide (Lys-Gly) (interchain with G-Cter in ubiquitin) linkage. The Nuclear localization signal motif lies at 404 to 411; that stretch reads AKREAALE. Lys-661 is covalently cross-linked (Glycyl lysine isopeptide (Lys-Gly) (interchain with G-Cter in ubiquitin)). Phosphoserine occurs at positions 764, 787, 825, and 843. Disordered regions lie at residues 801-997 and 1020-1077; these read TVKL…GKAE and NNTG…SIGK. A compositionally biased stretch (basic and acidic residues) spans 813–825; it reads SLDRVSGEDHEPS. A compositionally biased stretch (basic residues) spans 854–868; sequence RRGRGRGRGRGKSVR. Basic and acidic residues predominate over residues 877–897; that stretch reads VSRDSKPSDGETPRKRQREQT. Ser-910 carries the phosphoserine modification. Polar residues predominate over residues 932-941; that stretch reads VSQTPGQTRY. The segment covering 949 to 995 has biased composition (basic and acidic residues); that stretch reads VGTEEDKAQASKGATEKQERVNDDIRKVPSPKETRTPPEGENRENGK. Residues 1045–1066 are compositionally biased toward acidic residues; sequence EEDDENISMIEEENEGEEEEET.

This sequence belongs to the CRWN family. Core component of the LINC complex which is composed of inner nuclear membrane SUN domain-containing proteins coupled to outer nuclear membrane WIP proteins, the nucleoskeletal CRWN/LINC proteins, and, possibly, KAKU4. Expressed at low levels in roots, leaves, flowers and flower stalks.

It localises to the nucleus membrane. The protein localises to the nucleus. Its subcellular location is the nucleoplasm. The protein resides in the cytoplasm. It is found in the nucleus lamina. In terms of biological role, component of SUN-protein-containing multivariate complexes also called LINC complexes which link the nucleoskeleton and cytoskeleton by providing versatile outer nuclear membrane attachment sites for cytoskeletal filaments. Required for nucleus structure organization (e.g. size and shape). In Arabidopsis thaliana (Mouse-ear cress), this protein is Protein CROWDED NUCLEI 3.